Here is an 857-residue protein sequence, read N- to C-terminus: DNA mismatch repair protein MutS (857 aa).

613 to 620 (GPNMGGKS) is an ATP binding site. The interval 797–820 (TSLPHEQPAAHKAKDAPQVPHQSD) is disordered.

This sequence belongs to the DNA mismatch repair MutS family.

Its function is as follows. This protein is involved in the repair of mismatches in DNA. It is possible that it carries out the mismatch recognition step. This protein has a weak ATPase activity. This is DNA mismatch repair protein MutS from Pseudomonas putida (strain ATCC 47054 / DSM 6125 / CFBP 8728 / NCIMB 11950 / KT2440).